The chain runs to 492 residues: N-succinylglutamate 5-semialdehyde dehydrogenase (492 aa).

Position 220 to 225 (220 to 225 (GSANTG)) interacts with NAD(+). Active-site residues include glutamate 243 and cysteine 277.

Belongs to the aldehyde dehydrogenase family. AstD subfamily.

It catalyses the reaction N-succinyl-L-glutamate 5-semialdehyde + NAD(+) + H2O = N-succinyl-L-glutamate + NADH + 2 H(+). It functions in the pathway amino-acid degradation; L-arginine degradation via AST pathway; L-glutamate and succinate from L-arginine: step 4/5. Functionally, catalyzes the NAD-dependent reduction of succinylglutamate semialdehyde into succinylglutamate. The chain is N-succinylglutamate 5-semialdehyde dehydrogenase from Escherichia coli (strain UTI89 / UPEC).